The chain runs to 178 residues: Interleukin-10 (178 aa).

Residues methionine 1 to alanine 18 form the signal peptide. Disulfide bonds link cysteine 30-cysteine 126 and cysteine 80-cysteine 132. An N-linked (GlcNAc...) asparagine glycan is attached at asparagine 134.

It belongs to the IL-10 family. As to quaternary structure, homodimer. Interacts with IL10RA and IL10RB.

It localises to the secreted. Major immune regulatory cytokine that acts on many cells of the immune system where it has profound anti-inflammatory functions, limiting excessive tissue disruption caused by inflammation. Mechanistically, IL10 binds to its heterotetrameric receptor comprising IL10RA and IL10RB leading to JAK1 and STAT2-mediated phosphorylation of STAT3. In turn, STAT3 translocates to the nucleus where it drives expression of anti-inflammatory mediators. Targets antigen-presenting cells (APCs) such as macrophages and monocytes and inhibits their release of pro-inflammatory cytokines including granulocyte-macrophage colony-stimulating factor /GM-CSF, granulocyte colony-stimulating factor/G-CSF, IL-1 alpha, IL-1 beta, IL-6, IL-8 and TNF-alpha. Also interferes with antigen presentation by reducing the expression of MHC-class II and co-stimulatory molecules, thereby inhibiting their ability to induce T cell activation. In addition, controls the inflammatory response of macrophages by reprogramming essential metabolic pathways including mTOR signaling. In Macaca fascicularis (Crab-eating macaque), this protein is Interleukin-10 (IL10).